Here is a 460-residue protein sequence, read N- to C-terminus: UDP-N-acetylmuramoylalanine--D-glutamate ligase (460 aa).

117–123 (GTNGKTT) contributes to the ATP binding site.

Belongs to the MurCDEF family.

It is found in the cytoplasm. It catalyses the reaction UDP-N-acetyl-alpha-D-muramoyl-L-alanine + D-glutamate + ATP = UDP-N-acetyl-alpha-D-muramoyl-L-alanyl-D-glutamate + ADP + phosphate + H(+). It functions in the pathway cell wall biogenesis; peptidoglycan biosynthesis. Cell wall formation. Catalyzes the addition of glutamate to the nucleotide precursor UDP-N-acetylmuramoyl-L-alanine (UMA). The protein is UDP-N-acetylmuramoylalanine--D-glutamate ligase of Prochlorococcus marinus (strain MIT 9313).